Here is a 374-residue protein sequence, read N- to C-terminus: MNALFIIIFMIVVGAIIGGITNVIAIRMLFHPFKPYYIFKFRVPFTPGLIPKRREEIATKIGQVIEEHLLTETLINEKLKSEQSQQAIESMIQQQLQKLTKDQLSIKQITSQIDIDIEQVLQTNGNQYIASQLNNYYTKHQNQTIASLLPNQLVTFLDQHVDNATDLLCDRARNYLSSAKGTQDINDMLDTFFNEKGKLIGMLQMFMTKESIADRIQQELIRLTSHPKARAIVTSLITNEYQTFKDKPLNELLDASQFNEIAENLSVYVTTYASKQANKPVVTLMPQFVDYLEGQLSSKLANLIIEQLSIHLSTIMKKVDLRGLIEEQINTFDLDYIEKLIIEIANKELKLIMSLGFILGGIIGFFQGLVAIFV.

2 consecutive transmembrane segments (helical) span residues 4–24 (LFII…TNVI) and 354–374 (SLGF…AIFV).

This sequence belongs to the UPF0754 family.

It localises to the cell membrane. This chain is UPF0754 membrane protein SAB1779c, found in Staphylococcus aureus (strain bovine RF122 / ET3-1).